The chain runs to 246 residues: Small ribosomal subunit protein uS2 (246 aa).

Belongs to the universal ribosomal protein uS2 family.

In Burkholderia vietnamiensis (strain G4 / LMG 22486) (Burkholderia cepacia (strain R1808)), this protein is Small ribosomal subunit protein uS2.